Here is a 114-residue protein sequence, read N- to C-terminus: MRLLILALLGICSLTAYIVEGVGSEVSHRRTCVSLTTQRLPVSRIKTYTITEGSLRAVIFITKRGLKVCADPQATWVRDVVRSMDRKSNTRNNMIQTKPTGTQQSTNTAVTLTG.

A signal peptide spans 1-21 (MRLLILALLGICSLTAYIVEG). An intrachain disulfide couples Cys-32 to Cys-69. Residues 91-114 (RNNMIQTKPTGTQQSTNTAVTLTG) form a disordered region.

The protein belongs to the intercrine gamma family.

Its subcellular location is the secreted. In terms of biological role, chemotactic activity for lymphocytes but not for monocytes or neutrophils. The sequence is that of Cytokine SCM-1 beta (XCL2) from Homo sapiens (Human).